Here is a 253-residue protein sequence, read N- to C-terminus: NAD(P)H-quinone oxidoreductase subunit K (253 aa).

Residues cysteine 68, cysteine 69, cysteine 133, and cysteine 164 each coordinate [4Fe-4S] cluster.

Belongs to the complex I 20 kDa subunit family. NDH-1 can be composed of about 15 different subunits; different subcomplexes with different compositions have been identified which probably have different functions. [4Fe-4S] cluster is required as a cofactor.

The protein resides in the cellular thylakoid membrane. The enzyme catalyses a plastoquinone + NADH + (n+1) H(+)(in) = a plastoquinol + NAD(+) + n H(+)(out). It catalyses the reaction a plastoquinone + NADPH + (n+1) H(+)(in) = a plastoquinol + NADP(+) + n H(+)(out). In terms of biological role, NDH-1 shuttles electrons from an unknown electron donor, via FMN and iron-sulfur (Fe-S) centers, to quinones in the respiratory and/or the photosynthetic chain. The immediate electron acceptor for the enzyme in this species is believed to be plastoquinone. Couples the redox reaction to proton translocation, and thus conserves the redox energy in a proton gradient. Cyanobacterial NDH-1 also plays a role in inorganic carbon-concentration. The chain is NAD(P)H-quinone oxidoreductase subunit K from Synechococcus sp. (strain CC9311).